Consider the following 435-residue polypeptide: Serine--tRNA ligase (435 aa).

Position 242–244 (242–244 (TAE)) interacts with L-serine. 273–275 (RSE) serves as a coordination point for ATP. L-serine is bound at residue Glu-296. 360-363 (EISS) provides a ligand contact to ATP. Residue Ser-396 participates in L-serine binding.

It belongs to the class-II aminoacyl-tRNA synthetase family. Type-1 seryl-tRNA synthetase subfamily. Homodimer. The tRNA molecule binds across the dimer.

Its subcellular location is the cytoplasm. The catalysed reaction is tRNA(Ser) + L-serine + ATP = L-seryl-tRNA(Ser) + AMP + diphosphate + H(+). The enzyme catalyses tRNA(Sec) + L-serine + ATP = L-seryl-tRNA(Sec) + AMP + diphosphate + H(+). Its pathway is aminoacyl-tRNA biosynthesis; selenocysteinyl-tRNA(Sec) biosynthesis; L-seryl-tRNA(Sec) from L-serine and tRNA(Sec): step 1/1. In terms of biological role, catalyzes the attachment of serine to tRNA(Ser). Is also able to aminoacylate tRNA(Sec) with serine, to form the misacylated tRNA L-seryl-tRNA(Sec), which will be further converted into selenocysteinyl-tRNA(Sec). This chain is Serine--tRNA ligase, found in Vibrio campbellii (strain ATCC BAA-1116).